Here is a 520-residue protein sequence, read N- to C-terminus: Peptide chain release factor 3 (520 aa).

In terms of domain architecture, tr-type G spans 8 to 277 (ESRKTFAIIS…FAPMPNARQT (270 aa)). Residues 17–24 (SHPDAGKT), 85–89 (DTPGH), and 139–142 (NKLD) contribute to the GTP site.

This sequence belongs to the TRAFAC class translation factor GTPase superfamily. Classic translation factor GTPase family. PrfC subfamily.

The protein resides in the cytoplasm. In terms of biological role, increases the formation of ribosomal termination complexes and stimulates activities of RF-1 and RF-2. It binds guanine nucleotides and has strong preference for UGA stop codons. It may interact directly with the ribosome. The stimulation of RF-1 and RF-2 is significantly reduced by GTP and GDP, but not by GMP. The protein is Peptide chain release factor 3 of Staphylococcus aureus (strain MRSA252).